The primary structure comprises 432 residues: Adenylosuccinate synthetase (432 aa).

Residues 13 to 19 and 41 to 43 contribute to the GTP site; these read GDEGKGK and GHT. Asp-14 functions as the Proton acceptor in the catalytic mechanism. Positions 14 and 41 each coordinate Mg(2+). Residues 14–17, 39–42, Thr-130, Arg-144, Gln-225, Thr-240, and Arg-304 each bind IMP; these read DEGK and NAGH. The Proton donor role is filled by His-42. 300 to 306 serves as a coordination point for substrate; that stretch reads ATTGRRR. GTP-binding positions include Arg-306, 332–334, and 415–417; these read KLD and STG.

Belongs to the adenylosuccinate synthetase family. In terms of assembly, homodimer. The cofactor is Mg(2+).

The protein resides in the cytoplasm. It carries out the reaction IMP + L-aspartate + GTP = N(6)-(1,2-dicarboxyethyl)-AMP + GDP + phosphate + 2 H(+). It functions in the pathway purine metabolism; AMP biosynthesis via de novo pathway; AMP from IMP: step 1/2. Plays an important role in the de novo pathway of purine nucleotide biosynthesis. Catalyzes the first committed step in the biosynthesis of AMP from IMP. The chain is Adenylosuccinate synthetase from Salmonella arizonae (strain ATCC BAA-731 / CDC346-86 / RSK2980).